We begin with the raw amino-acid sequence, 400 residues long: Exodeoxyribonuclease 7 large subunit (400 aa).

Belongs to the XseA family. Heterooligomer composed of large and small subunits.

The protein resides in the cytoplasm. The enzyme catalyses Exonucleolytic cleavage in either 5'- to 3'- or 3'- to 5'-direction to yield nucleoside 5'-phosphates.. Bidirectionally degrades single-stranded DNA into large acid-insoluble oligonucleotides, which are then degraded further into small acid-soluble oligonucleotides. This is Exodeoxyribonuclease 7 large subunit from Clostridium novyi (strain NT).